An 834-amino-acid chain; its full sequence is Periplasmic nitrate reductase (834 aa).

The tat-type signal signal peptide spans 1–32; it reads MTEPKIDRRQLLKLEAAAIAAAAAGMPTVARA. Residues 44–100 enclose the 4Fe-4S Mo/W bis-MGD-type domain; it reads LKWDKAACRFCGTGCSVMVATKDNRVVATHGDIKAEVNRGLNCVKGYFLSKIMYGHD. Positions 51, 54, 58, and 86 each coordinate [4Fe-4S] cluster. Residues lysine 88, glutamine 155, asparagine 180, cysteine 184, 217–224, 248–252, 267–269, methionine 378, glutamine 382, asparagine 488, 514–515, lysine 537, aspartate 564, and 724–733 contribute to the Mo-bis(molybdopterin guanine dinucleotide) site; these read WGSNMAEM, STFEH, QTD, SD, and TGRVVEHWHS. A substrate-binding site is contributed by tryptophan 800. Residues asparagine 808 and lysine 825 each contribute to the Mo-bis(molybdopterin guanine dinucleotide) site.

It belongs to the prokaryotic molybdopterin-containing oxidoreductase family. NasA/NapA/NarB subfamily. In terms of assembly, component of the periplasmic nitrate reductase NapAB complex composed of NapA and NapB. It depends on [4Fe-4S] cluster as a cofactor. Mo-bis(molybdopterin guanine dinucleotide) is required as a cofactor. In terms of processing, predicted to be exported by the Tat system. The position of the signal peptide cleavage has not been experimentally proven.

The protein resides in the periplasm. It carries out the reaction 2 Fe(II)-[cytochrome] + nitrate + 2 H(+) = 2 Fe(III)-[cytochrome] + nitrite + H2O. In terms of biological role, catalytic subunit of the periplasmic nitrate reductase complex NapAB. Receives electrons from NapB and catalyzes the reduction of nitrate to nitrite. The sequence is that of Periplasmic nitrate reductase from Bradyrhizobium sp. (strain ORS 278).